The sequence spans 155 residues: DNA gyrase inhibitor (155 aa).

Belongs to the DNA gyrase inhibitor family. Interacts with DNA gyrase.

The protein resides in the cytoplasm. Functionally, inhibits the supercoiling activity of DNA gyrase. Acts by inhibiting DNA gyrase at an early step, prior to (or at the step of) binding of DNA by the gyrase. It protects cells against toxins that target DNA gyrase, by inhibiting activity of these toxins and reducing the formation of lethal double-strand breaks in the cell. This is DNA gyrase inhibitor from Edwardsiella piscicida.